The chain runs to 473 residues: Adenosylhomocysteinase (473 aa).

The substrate site is built by T60, D135, and E197. 198–200 lines the NAD(+) pocket; sequence TTT. Residues K227 and D231 each coordinate substrate. NAD(+) contacts are provided by residues N232, 261–266, E284, N319, 340–342, and N385; these read GFGDVG and IGH.

Belongs to the adenosylhomocysteinase family. Requires NAD(+) as cofactor.

The protein resides in the cytoplasm. It carries out the reaction S-adenosyl-L-homocysteine + H2O = L-homocysteine + adenosine. It participates in amino-acid biosynthesis; L-homocysteine biosynthesis; L-homocysteine from S-adenosyl-L-homocysteine: step 1/1. Functionally, may play a key role in the regulation of the intracellular concentration of adenosylhomocysteine. The polypeptide is Adenosylhomocysteinase (Bradyrhizobium diazoefficiens (strain JCM 10833 / BCRC 13528 / IAM 13628 / NBRC 14792 / USDA 110)).